A 250-amino-acid chain; its full sequence is Endonuclease NucS (250 aa).

This sequence belongs to the NucS endonuclease family.

Its subcellular location is the cytoplasm. Cleaves both 3' and 5' ssDNA extremities of branched DNA structures. The chain is Endonuclease NucS from Sulfolobus acidocaldarius (strain ATCC 33909 / DSM 639 / JCM 8929 / NBRC 15157 / NCIMB 11770).